We begin with the raw amino-acid sequence, 485 residues long: ATP-dependent 6-phosphofructokinase 7 (485 aa).

ATP contacts are provided by residues Gly101, 164–165 (RG), and 189–192 (GDGT). Asp190 lines the Mg(2+) pocket. Substrate-binding positions include 218–220 (TID), 263–265 (MGR), Glu319, and 374–377 (YMIR). Asp220 functions as the Proton acceptor in the catalytic mechanism. The segment at 449–485 (SFLGPKDTSEEKKELPETPLLDDGAVDIPPVTKEVTK) is disordered. The segment covering 455–464 (DTSEEKKELP) has biased composition (basic and acidic residues).

Belongs to the phosphofructokinase type A (PFKA) family. PPi-dependent PFK group II subfamily. Atypical ATP-dependent clade 'X' sub-subfamily. As to quaternary structure, homotetramer. It depends on Mg(2+) as a cofactor. In terms of tissue distribution, expressed in roots, leaves, stems and flowers.

The protein localises to the cytoplasm. It carries out the reaction beta-D-fructose 6-phosphate + ATP = beta-D-fructose 1,6-bisphosphate + ADP + H(+). It participates in carbohydrate degradation; glycolysis; D-glyceraldehyde 3-phosphate and glycerone phosphate from D-glucose: step 3/4. Allosterically activated by AMP. Its function is as follows. Catalyzes the phosphorylation of D-fructose 6-phosphate to fructose 1,6-bisphosphate by ATP, the first committing step of glycolysis. This Arabidopsis thaliana (Mouse-ear cress) protein is ATP-dependent 6-phosphofructokinase 7.